The chain runs to 552 residues: Gamma-aminobutyric acid receptor subunit alpha-4 (552 aa).

The signal sequence occupies residues Met-1 to Gly-35. The Extracellular segment spans residues Gln-36–Phe-259. Asn-47 is a glycosylation site (N-linked (GlcNAc...) asparagine). 4-aminobutanoate is bound at residue Arg-100. N-linked (GlcNAc...) asparagine glycosylation is found at Asn-144 and Asn-157. Thr-163 serves as a coordination point for 4-aminobutanoate. Cysteines 172 and 186 form a disulfide. A helical membrane pass occupies residues Met-260 to Ile-280. Residues Asn-281–Ser-284 lie on the Cytoplasmic side of the membrane. The chain crosses the membrane as a helical span at residues Val-285–Ser-305. The Extracellular segment spans residues Ala-306–Ala-318. A helical transmembrane segment spans residues Met-319–Asn-341. The Cytoplasmic portion of the chain corresponds to Tyr-342–Lys-515. Disordered stretches follow at residues Lys-353 to Arg-480 and Gly-492 to Thr-513. A compositionally biased stretch (basic and acidic residues) spans Ser-396–Val-406. The segment covering Gly-407–Ala-422 has biased composition (polar residues). Over residues Ser-445–Ser-458 the composition is skewed to low complexity. Over residues Thr-500–Ser-509 the composition is skewed to pro residues. The chain crosses the membrane as a helical span at residues Ile-516 to Val-538. Residues Tyr-539–Met-552 lie on the Extracellular side of the membrane.

Belongs to the ligand-gated ion channel (TC 1.A.9) family. Gamma-aminobutyric acid receptor (TC 1.A.9.5) subfamily. GABRA4 sub-subfamily. Heteropentamer, formed by a combination of alpha (GABRA1-6), beta (GABRB1-3), gamma (GABRG1-3), delta (GABRD), epsilon (GABRE), rho (GABRR1-3), pi (GABRP) and theta (GABRQ) chains, each subunit exhibiting distinct physiological and pharmacological properties. Expressed in the brain.

The protein resides in the cell membrane. It is found in the postsynaptic cell membrane. The enzyme catalyses chloride(in) = chloride(out). With respect to regulation, potentiated by gaboxadol. Potentiated by histamine. In terms of biological role, alpha subunit of the heteropentameric ligand-gated chloride channel gated by gamma-aminobutyric acid (GABA), a major inhibitory neurotransmitter in the brain. GABA-gated chloride channels, also named GABA(A) receptors (GABAAR), consist of five subunits arranged around a central pore and contain GABA active binding site(s) located at the alpha and beta subunit interface(s). Alpha-4/GABRA4 subunit often assembles with delta or gamma-2 subunits, in combination with beta subunits. When activated by GABA, GABAARs selectively allow the flow of chloride anions across the cell membrane down their electrochemical gradient. GABAARs containing alpha-4 are predominantly extrasynaptic, contributing to tonic inhibition in dentate granule cells and thalamic relay neurons. Extrasynaptic alpha-4-containing GABAARs control levels of excitability and network activity. GABAAR containing alpha-4-beta-3-delta subunits can simultaneously bind GABA and histamine where histamine binds at the interface of two neighboring beta subunits, which may be involved in the regulation of sleep and wakefulness. This chain is Gamma-aminobutyric acid receptor subunit alpha-4, found in Mus musculus (Mouse).